Here is a 211-residue protein sequence, read N- to C-terminus: Guanylate kinase (211 aa).

The Guanylate kinase-like domain occupies 7 to 187 (GLLIILSGPS…AADRIIAIIR (181 aa)). An ATP-binding site is contributed by 14 to 21 (GPSGVGKA).

The protein belongs to the guanylate kinase family.

It localises to the cytoplasm. The catalysed reaction is GMP + ATP = GDP + ADP. Its function is as follows. Essential for recycling GMP and indirectly, cGMP. This Aster yellows witches'-broom phytoplasma (strain AYWB) protein is Guanylate kinase.